The sequence spans 1426 residues: A disintegrin and metalloproteinase with thrombospondin motifs 13 (1426 aa).

An N-terminal signal peptide occupies residues 1–33 (MSQLCLWLTCQPCYAVSVRGILTGAIFILGCWG). Residues 34-76 (LSDFQKSLLQDLEPKDVSSYFGHHAAPFTGHPPSHLQRLRRRR) constitute a propeptide that is removed on maturation. One can recognise a Peptidase M12B domain in the interval 74–291 (RRRTLEDILH…GQMHCFQDPP (218 aa)). Glu85 provides a ligand contact to Ca(2+). N-linked (GlcNAc...) asparagine glycans are attached at residues Asn144 and Asn148. 3 cysteine pairs are disulfide-bonded: Cys157/Cys210, Cys204/Cys286, and Cys246/Cys270. Positions 175, 184, 186, 189, and 214 each coordinate Ca(2+). His226 lines the Zn(2+) pocket. Glu227 is an active-site residue. Residues His230 and His236 each contribute to the Zn(2+) site. Positions 281 and 289 each coordinate Ca(2+). The region spanning 295 to 388 (SGLTRHQLMA…LAELAPVAAV (94 aa)) is the Disintegrin domain. 11 disulfide bridges follow: Cys316-Cys342, Cys327-Cys352, Cys337-Cys371, Cys365-Cys376, Cys401-Cys438, Cys405-Cys443, Cys416-Cys428, Cys488-Cys527, Cys513-Cys532, Cys537-Cys553, and Cys550-Cys560. Positions 389–444 (HGHWSSWGPHSPCSRSCGGGVITRRRWCNNPRPAFGGRACVGEDLQAKMCNTQACE) constitute a TSP type-1 1 domain. The tract at residues 445 to 561 (KTQLEFMSEQ…VCGGDNSTCS (117 aa)) is cysteine-rich. A Cell attachment site motif is present at residues 503–505 (RGD). A spacer region spans residues 556–685 (DNSTCSSRNG…PDITFSYFQL (130 aa)). N-linked (GlcNAc...) asparagine glycosylation is found at Asn557, Asn564, Asn584, and Asn619. TSP type-1 domains lie at 687–746 (QQAA…VSAP), 747–810 (CSPY…QPCP), 808–871 (PCPT…SLCS), 904–957 (WTPL…RARP), 958–1019 (CPAR…EPCP), 1020–1078 (ARWK…IADC), and 1079–1137 (AFRW…GPCA). O-linked (Fuc...) serine glycans are attached at residues Ser703 and Ser762. Residue Asn834 is glycosylated (N-linked (GlcNAc...) asparagine). Ser914 is a glycosylation site (O-linked (Fuc...) serine). Thr973 carries O-linked (Fuc...) threonine glycosylation. A glycan (O-linked (Fuc...) serine) is linked at Ser1033. N-linked (GlcNAc...) asparagine glycosylation occurs at Asn1057. A glycan (O-linked (Fuc...) serine) is linked at Ser1093. CUB domains lie at 1195-1302 (ACGR…FYKE) and 1293-1426 (QPAP…LALS).

The cofactor is Zn(2+). It depends on Ca(2+) as a cofactor. In terms of processing, the precursor is processed by a furin endopeptidase which cleaves off the pro-domain. O-glycosylated. O-fucosylated by POFUT2 on a serine or a threonine residue found within the consensus sequence C1-X(2)-(S/T)-C2-G of the TSP type-1 repeat domains where C1 and C2 are the first and second cysteine residue of the repeat, respectively. Fucosylated repeats can then be further glycosylated by the addition of a beta-1,3-glucose residue by the glucosyltransferase, B3GALTL. Fucosylation mediates the efficient secretion of ADAMTS13. May also be C-glycosylated on tryptophan residues within the consensus sequence W-X-X-W of the TPRs, and also N-glycosylated. These other glycosylations can also facilitate secretion. As to expression, plasma. Expression is consistently high in liver, medium in lung and spleen, low in skeletal muscle and undetectable in heart, brain, kidney and testis.

It is found in the secreted. The enzyme catalyses The enzyme cleaves the von Willebrand factor at bond 842-Tyr-|-Met-843 within the A2 domain.. Its activity is regulated as follows. Zinc and calcium ions cooperatively modulate enzyme activity. The cleavage of the pro-domain is not required for protease activity. Dependence on calcium for proteolytic activity is mediated by the high affinity site. Its function is as follows. Cleaves the vWF multimers in plasma into smaller forms thereby controlling vWF-mediated platelet thrombus formation. In Mus musculus (Mouse), this protein is A disintegrin and metalloproteinase with thrombospondin motifs 13 (Adamts13).